The sequence spans 191 residues: Shikimate kinase (191 aa).

Residue 14–19 (GSGKST) participates in ATP binding. S18 lines the Mg(2+) pocket. D36, R60, and G82 together coordinate substrate. R120 contacts ATP. R147 lines the substrate pocket.

The protein belongs to the shikimate kinase family. Monomer. Requires Mg(2+) as cofactor.

It localises to the cytoplasm. The catalysed reaction is shikimate + ATP = 3-phosphoshikimate + ADP + H(+). Its pathway is metabolic intermediate biosynthesis; chorismate biosynthesis; chorismate from D-erythrose 4-phosphate and phosphoenolpyruvate: step 5/7. In terms of biological role, catalyzes the specific phosphorylation of the 3-hydroxyl group of shikimic acid using ATP as a cosubstrate. This chain is Shikimate kinase, found in Chlorobaculum tepidum (strain ATCC 49652 / DSM 12025 / NBRC 103806 / TLS) (Chlorobium tepidum).